Here is a 566-residue protein sequence, read N- to C-terminus: Phenylalanine--tRNA ligase beta subunit (566 aa).

Positions 287 to 362 constitute a B5 domain; that stretch reads YFQEEVEFNV…IGEGLSSFNP (76 aa). Asp340, Asp346, Glu349, and Asp350 together coordinate Mg(2+).

This sequence belongs to the phenylalanyl-tRNA synthetase beta subunit family. Type 2 subfamily. As to quaternary structure, tetramer of two alpha and two beta subunits. Mg(2+) serves as cofactor.

Its subcellular location is the cytoplasm. The enzyme catalyses tRNA(Phe) + L-phenylalanine + ATP = L-phenylalanyl-tRNA(Phe) + AMP + diphosphate + H(+). The sequence is that of Phenylalanine--tRNA ligase beta subunit from Borreliella burgdorferi (strain ATCC 35210 / DSM 4680 / CIP 102532 / B31) (Borrelia burgdorferi).